Reading from the N-terminus, the 387-residue chain is Phosphoglycerate kinase (387 aa).

Substrate-binding positions include 21 to 23 (DLN), R36, 59 to 62 (HLGR), R113, and R146. Residues K197, E314, and 340 to 343 (GGDT) each bind ATP.

This sequence belongs to the phosphoglycerate kinase family. As to quaternary structure, monomer.

The protein resides in the cytoplasm. It catalyses the reaction (2R)-3-phosphoglycerate + ATP = (2R)-3-phospho-glyceroyl phosphate + ADP. It functions in the pathway carbohydrate degradation; glycolysis; pyruvate from D-glyceraldehyde 3-phosphate: step 2/5. The polypeptide is Phosphoglycerate kinase (Salmonella schwarzengrund (strain CVM19633)).